A 166-amino-acid chain; its full sequence is Small ribosomal subunit protein uS5 (166 aa).

The 64-residue stretch at 11–74 (LQEKLIAVNR…EKARRNMMNV (64 aa)) folds into the S5 DRBM domain.

The protein belongs to the universal ribosomal protein uS5 family. Part of the 30S ribosomal subunit. Contacts proteins S4 and S8.

Its function is as follows. With S4 and S12 plays an important role in translational accuracy. In terms of biological role, located at the back of the 30S subunit body where it stabilizes the conformation of the head with respect to the body. The sequence is that of Small ribosomal subunit protein uS5 from Buchnera aphidicola subsp. Acyrthosiphon kondoi (Acyrthosiphon kondoi symbiotic bacterium).